Reading from the N-terminus, the 119-residue chain is MARVKGGVVSRKRRKRILKLAKGYYGAKHILFRTAKEQVMNSYYYAYRDRRQKKRDFRKLWITRINAAARMNGLSYSQLMHGLKLAEIEVNRKMLADLAVNDAAAFTALADAAKAKLGK.

It belongs to the bacterial ribosomal protein bL20 family.

In terms of biological role, binds directly to 23S ribosomal RNA and is necessary for the in vitro assembly process of the 50S ribosomal subunit. It is not involved in the protein synthesizing functions of that subunit. This Streptococcus equi subsp. equi (strain 4047) protein is Large ribosomal subunit protein bL20.